The chain runs to 189 residues: Segregation and condensation protein B (189 aa).

The protein belongs to the ScpB family. In terms of assembly, homodimer. Homodimerization may be required to stabilize the binding of ScpA to the Smc head domains. Component of a cohesin-like complex composed of ScpA, ScpB and the Smc homodimer, in which ScpA and ScpB bind to the head domain of Smc. The presence of the three proteins is required for the association of the complex with DNA.

The protein resides in the cytoplasm. Its function is as follows. Participates in chromosomal partition during cell division. May act via the formation of a condensin-like complex containing Smc and ScpA that pull DNA away from mid-cell into both cell halves. This chain is Segregation and condensation protein B, found in Streptococcus sanguinis (strain SK36).